Here is a 217-residue protein sequence, read N- to C-terminus: Protein LURP-one-related 15 (217 aa).

Residue Met1 is modified to N-acetylmethionine.

It belongs to the LOR family.

Functionally, might be related to the phospholipid scramblase and tubby-like superfamily of membrane tethered transcription factors. The polypeptide is Protein LURP-one-related 15 (Arabidopsis thaliana (Mouse-ear cress)).